The primary structure comprises 842 residues: Outer membrane usher protein AggC (842 aa).

A signal peptide spans 1–21 (MKTSSFIIVILLCFRIENVIA). C819 and C841 are joined by a disulfide.

Belongs to the fimbrial export usher family.

It localises to the cell outer membrane. Involved in the export and assembly of the AAF/I fimbriae subunits across the outer membrane. In Escherichia coli, this protein is Outer membrane usher protein AggC (aggC).